Reading from the N-terminus, the 993-residue chain is UPF0182 protein MAV_4137 (993 aa).

A run of 7 helical transmembrane segments spans residues 18-38, 63-83, 113-133, 175-195, 210-230, 254-274, and 287-307; these read ILILIALGVIALLLAGPRLID, FVVFLIAGLLVGGIVFAGLAV, LVSIGVPVAIGLLAGIIAQSY, FVAVFLAFVANLLAHYIFGGI, IQLVTLVGLLVLLKAVAYWLD, AVLPAKLILMAIALICAAAVF, and IGLVLLLLSSLIVGAGWPLIV. Residues 903–941 form a disordered region; it reads NIQPTEGGAPAASPPANAPAPAVTPGSAPPVAAPPVPDG. The span at 929–939 shows a compositional bias: pro residues; the sequence is SAPPVAAPPVP.

This sequence belongs to the UPF0182 family.

The protein localises to the cell membrane. In Mycobacterium avium (strain 104), this protein is UPF0182 protein MAV_4137.